The chain runs to 532 residues: Phosphoribosylamine--glycine ligase, chloroplastic (532 aa).

The N-terminal 75 residues, M1–C75, are a transit peptide targeting the chloroplast. The region spanning K204–K412 is the ATP-grasp domain.

It belongs to the GARS family.

Its subcellular location is the plastid. It is found in the chloroplast. It catalyses the reaction 5-phospho-beta-D-ribosylamine + glycine + ATP = N(1)-(5-phospho-beta-D-ribosyl)glycinamide + ADP + phosphate + H(+). It functions in the pathway purine metabolism; IMP biosynthesis via de novo pathway; N(1)-(5-phospho-D-ribosyl)glycinamide from 5-phospho-alpha-D-ribose 1-diphosphate: step 2/2. This chain is Phosphoribosylamine--glycine ligase, chloroplastic (PUR2), found in Arabidopsis thaliana (Mouse-ear cress).